The sequence spans 678 residues: Ribonuclease Z 2, mitochondrial (678 aa).

Residues 1-37 (MKASLLVPRRALLFGQLLPPKYSWYSVKRWQSQLTFR) constitute a mitochondrion transit peptide.

The protein belongs to the RNase Z family. It depends on Zn(2+) as a cofactor.

The protein resides in the mitochondrion. It localises to the cytoplasm. The enzyme catalyses Endonucleolytic cleavage of RNA, removing extra 3' nucleotides from tRNA precursor, generating 3' termini of tRNAs. A 3'-hydroxy group is left at the tRNA terminus and a 5'-phosphoryl group is left at the trailer molecule.. Its function is as follows. Zinc phosphodiesterase, which displays some tRNA 3'-processing endonuclease activity. May be involved in tRNA maturation, by removing a 3'-trailer from precursor tRNA. This chain is Ribonuclease Z 2, mitochondrial (trz2), found in Schizosaccharomyces pombe (strain 972 / ATCC 24843) (Fission yeast).